We begin with the raw amino-acid sequence, 207 residues long: Guanylate kinase (207 aa).

The Guanylate kinase-like domain occupies 5 to 185; that stretch reads GFVLLISGPS…SYEALRAILI (181 aa). An ATP-binding site is contributed by 12–19; sequence GPSGAGKS.

The protein belongs to the guanylate kinase family.

Its subcellular location is the cytoplasm. It catalyses the reaction GMP + ATP = GDP + ADP. In terms of biological role, essential for recycling GMP and indirectly, cGMP. This is Guanylate kinase (gmk) from Campylobacter jejuni subsp. jejuni serotype O:2 (strain ATCC 700819 / NCTC 11168).